A 313-amino-acid chain; its full sequence is Beta-lactamase BRO-1 (313 aa).

Positions 1-25 (MQRRHFLQKTLLALPIIFSGNLLTG) are cleaved as a signal peptide. Residue Cys-26 is the site of N-palmitoyl cysteine attachment. A lipid anchor (S-diacylglycerol cysteine) is attached at Cys-26. Residue Ser-90 is the Acyl-ester intermediate of the active site. 255–257 (KTG) contributes to the substrate binding site.

It belongs to the class-A beta-lactamase family.

The protein resides in the cell membrane. It catalyses the reaction a beta-lactam + H2O = a substituted beta-amino acid. The protein is Beta-lactamase BRO-1 (bla) of Moraxella catarrhalis (Branhamella catarrhalis).